A 252-amino-acid polypeptide reads, in one-letter code: Tricin synthase 1 (252 aa).

Residues S65, E87, 89–90 (GV), S95, and D113 contribute to the S-adenosyl-L-methionine site. An a divalent metal cation-binding site is contributed by D168. D170 contributes to the S-adenosyl-L-methionine binding site. A divalent metal cation is bound by residues D194 and N195.

Belongs to the class I-like SAM-binding methyltransferase superfamily. Cation-dependent O-methyltransferase family. CCoAMT subfamily. The cofactor is Mg(2+). Mn(2+) serves as cofactor. It depends on Co(2+) as a cofactor. As to expression, ubiquitous. Highest expression in stems and roots.

It is found in the nucleus. The enzyme catalyses tricetin + 2 S-adenosyl-L-methionine = 3',5'-di-O-methyltricetin + 2 S-adenosyl-L-homocysteine + 2 H(+). Functionally, catalyzes the stepwise methylation of tricetin to its 3'-mono- and 3',5'-dimethyl ethers. No 3',4',5'-trimethylated ester derivatives are produced. Can use caffeoyl-CoA, 5-hydroxyferulic acid, luteolin, tricetin, quercetin, myrcetin and 7,8-dihydroxyflavone as substrates, but not naringenin, apigenin or kaempferol. The 2,3-double bond and the O-dihydroxyl group of the substrate are both required for catalytic activity of the enzyme. This Oryza sativa subsp. japonica (Rice) protein is Tricin synthase 1 (ROMT-15).